A 428-amino-acid chain; its full sequence is MLLSRFQQQLTQHFPQQPNVLLSLSGGIDSVVLLDLFSRTTTPLRAIYIHHGLSANADNWADFCEALCKQYNIPFILQKVTVDKSTGIEAGARTARYKAIAEHIQANEILATAHHLNDQAETFLLALKRGSGVKGLSAMQIVSHRQNMTIFRPLLSTTKKEIQQYAKQQQLCWIEDESNQNNHYDRNFLRNQILPLLLQRWPQFNQMIARSAKHCTAQQQLLAELLDEELHRYANIDEKSLQISQFKHFSPLKQQQLIRLWLAKCDIPMPTSAQFEQIISGFLNSATDKHPQLRLKNWTLRRFQKTLYLTPQLANTQHFCQILSVNQTIDLPDNLGQLTRQPQQIIYQQTHKTNRLLLPESLRTVPLTIKLHQTGKVKRYQHPHSEEMKKLYQQAKIPVWQRTRTILVFFEDQLVDLLTQHKNQQNND.

ATP is bound at residue 25–30; the sequence is SGGIDS.

Belongs to the tRNA(Ile)-lysidine synthase family.

The protein resides in the cytoplasm. The enzyme catalyses cytidine(34) in tRNA(Ile2) + L-lysine + ATP = lysidine(34) in tRNA(Ile2) + AMP + diphosphate + H(+). Its function is as follows. Ligates lysine onto the cytidine present at position 34 of the AUA codon-specific tRNA(Ile) that contains the anticodon CAU, in an ATP-dependent manner. Cytidine is converted to lysidine, thus changing the amino acid specificity of the tRNA from methionine to isoleucine. This chain is tRNA(Ile)-lysidine synthase, found in Haemophilus ducreyi (strain 35000HP / ATCC 700724).